A 172-amino-acid polypeptide reads, in one-letter code: Endoribonuclease YbeY (172 aa).

The Zn(2+) site is built by His134, His138, and His144.

The protein belongs to the endoribonuclease YbeY family. Zn(2+) is required as a cofactor.

It localises to the cytoplasm. Functionally, single strand-specific metallo-endoribonuclease involved in late-stage 70S ribosome quality control and in maturation of the 3' terminus of the 16S rRNA. The protein is Endoribonuclease YbeY of Burkholderia cenocepacia (strain HI2424).